Here is an 887-residue protein sequence, read N- to C-terminus: Phosphatidylinositol 3-kinase catalytic subunit type 3 (887 aa).

A C2 PI3K-type domain is found at Y35–Q184. Residues V149–D170 are disordered. Over residues P156 to D170 the composition is skewed to polar residues. T163 carries the post-translational modification Phosphothreonine; by AMPK. S165 carries the phosphoserine; by AMPK modification. Phosphoserine is present on residues S244, S261, and S282. The region spanning D283 to V520 is the PIK helical domain. Residues L415 to S466 are disordered. Low complexity predominate over residues S425–S437. Pro residues predominate over residues P449–A459. The PI3K/PI4K catalytic domain occupies I605–F871. The G-loop stretch occupies residues L611–M617. Positions G740–N748 are catalytic loop. The segment at H759–N780 is activation loop.

Belongs to the PI3/PI4-kinase family. In terms of assembly, component of the PI3K (PI3KC3/PI3K-III/class III phosphatidylinositol 3-kinase) complex the core of which is composed of the catalytic subunit PIK3C3, the regulatory subunit PIK3R4 and BECN1 associating with additional regulatory/auxiliary subunits to form alternative complex forms. Alternative complex forms containing a fourth regulatory subunit in a mutually exclusive manner are: the PI3K complex I (PI3KC3-C1) containing ATG14, and the PI3K complex II (PI3KC3-C2) containing UVRAG. PI3KC3-C1 displays a V-shaped architecture with PIK3R4 serving as a bridge between PIK3C3 and the ATG14:BECN1 subcomplex. Both, PI3KC3-C1 and PI3KC3-C2, can associate with further regulatory subunits such as RUBCN, SH3GLB1/Bif-1 and AMBRA1. PI3KC3-C1 probably associates with PIK3CB. Interacts with RAB7A in the presence of PIK3R4. Interacts with AMBRA1. Interacts with BECN1P1/BECN2. Interacts with SLAMF1. May be a component of a complex composed of RAB5A (in GDP-bound form), DYN2 and PIK3C3. Interacts with NCKAP1L. Interacts with ATG14; this interaction is increased in the absence of TMEM39A. Interacts with STEEP1; the interaction is STING1-dependent and required for trafficking of STING1 from the endoplasmic reticulum. Interacts with YWHAG. Interacts with ARMC3. It depends on Mn(2+) as a cofactor. Ubiquitinated via 'Lys-29'- and 'Lys-48'-linked ubiquitination by UBE3C, promoting its degradation. Deubiquitination by ZRANB1/TRABID promotes its stabilization, leading to autophagosome maturation.

The protein localises to the midbody. Its subcellular location is the late endosome. It localises to the cytoplasmic vesicle. It is found in the autophagosome. It carries out the reaction a 1,2-diacyl-sn-glycero-3-phospho-(1D-myo-inositol) + ATP = a 1,2-diacyl-sn-glycero-3-phospho-(1D-myo-inositol-3-phosphate) + ADP + H(+). Its function is as follows. Catalytic subunit of the PI3K complex that mediates formation of phosphatidylinositol 3-phosphate; different complex forms are believed to play a role in multiple membrane trafficking pathways: PI3KC3-C1 is involved in initiation of autophagosomes and PI3KC3-C2 in maturation of autophagosomes and endocytosis. As part of PI3KC3-C1, promotes endoplasmic reticulum membrane curvature formation prior to vesicle budding. Involved in regulation of degradative endocytic trafficking and required for the abscission step in cytokinesis, probably in the context of PI3KC3-C2. Involved in the transport of lysosomal enzyme precursors to lysosomes. Required for transport from early to late endosomes. This is Phosphatidylinositol 3-kinase catalytic subunit type 3 from Mus musculus (Mouse).